Reading from the N-terminus, the 71-residue chain is Large ribosomal subunit protein bL28 (71 aa).

The protein belongs to the bacterial ribosomal protein bL28 family.

In Rubrobacter xylanophilus (strain DSM 9941 / JCM 11954 / NBRC 16129 / PRD-1), this protein is Large ribosomal subunit protein bL28.